Here is a 2628-residue protein sequence, read N- to C-terminus: Hemagglutinin A (2628 aa).

The N-terminal stretch at 1–24 (MRKLNSLFSLAVLLSLLCWGQTAA) is a signal peptide. Peptidase C25-like regions lie at residues 25 to 539 (AQGG…TPPP), 540 to 995 (GGTS…TPPP), 996 to 1451 (GGTS…TPPP), 1452 to 1907 (GGTS…TPPP), and 2074 to 2628 (IDAD…LAVK). 7 disordered regions span residues 493–512 (WDAP…LSES), 520–546 (SWKT…SFAG), 944–1002 (KWDA…SFAG), 1400–1458 (KWDA…SFAG), 1856–1881 (KWDA…SESF), 1890–1909 (KTID…PPGG), and 2336–2358 (SSWK…PPGG). Low complexity predominate over residues 496 to 508 (PNGTPNPNPGTTT).

It belongs to the peptidase C25 family.

Agglutinates erythrocytes. The sequence is that of Hemagglutinin A (hagA) from Porphyromonas gingivalis (Bacteroides gingivalis).